A 426-amino-acid polypeptide reads, in one-letter code: Enolase (426 aa).

Q163 contacts (2R)-2-phosphoglycerate. The active-site Proton donor is the E205. Mg(2+)-binding residues include D242, E286, and D313. (2R)-2-phosphoglycerate is bound by residues K338, R367, S368, and K389. The Proton acceptor role is filled by K338.

The protein belongs to the enolase family. It depends on Mg(2+) as a cofactor.

It localises to the cytoplasm. The protein localises to the secreted. It is found in the cell surface. It catalyses the reaction (2R)-2-phosphoglycerate = phosphoenolpyruvate + H2O. The protein operates within carbohydrate degradation; glycolysis; pyruvate from D-glyceraldehyde 3-phosphate: step 4/5. Catalyzes the reversible conversion of 2-phosphoglycerate (2-PG) into phosphoenolpyruvate (PEP). It is essential for the degradation of carbohydrates via glycolysis. This Helicobacter pylori (strain P12) protein is Enolase.